The following is a 153-amino-acid chain: MATTGTAAVATGTSTVKRKPVFVKVEQLKPGTTGHTLTVKVIEANIVVPVTRKTRPASSLSRPSQPSRIVECLIGDETGCILFTARNDQVDLMKPGATVILRNSRIDMFKGTMRLGVDKWGRIEATGAASFTVKEDNNLSLVEYELINVGGDQ.

At A2 the chain carries N-acetylalanine.

This is an uncharacterized protein from Arabidopsis thaliana (Mouse-ear cress).